A 114-amino-acid polypeptide reads, in one-letter code: Putative neurotoxin 7 (114 aa).

It belongs to the scolopendra neurotoxin 8 family. Post-translationally, contains 3 disulfide bonds. As to expression, expressed by the venom gland.

The protein resides in the secreted. This Scolopendra mutilans (Chinese red-headed centipede) protein is Putative neurotoxin 7.